We begin with the raw amino-acid sequence, 54 residues long: Ovomucoid (54 aa).

The region spanning 4-54 (VDCSDYPKPVCTLEDMPLCGSDNITYHNKCYFCNAVAHSNGTLTFSHFGKC) is the Kazal-like domain. 3 cysteine pairs are disulfide-bonded: Cys-6–Cys-36, Cys-14–Cys-33, and Cys-22–Cys-54. Asn-43 carries N-linked (GlcNAc...) asparagine glycosylation.

It localises to the secreted. In Carpococcyx renauldi (Coral-billed ground-cuckoo), this protein is Ovomucoid.